The chain runs to 333 residues: Transcription factor HHO6 (333 aa).

The 61-residue stretch at 189 to 249 (ALRKQRRCWN…HLQKYRLHIR (61 aa)) folds into the HTH myb-type domain. The segment at residues 220 to 245 (PKQIREHMQEEGLTNDEVKSHLQKYR) is a DNA-binding region (H-T-H motif). The tract at residues 274 to 333 (DEEETCEGGESLKRSNAQSDSPQGPLQLPSTTTTTGGDSSMEDVEDAKSESFQLERLRSP) is disordered. The span at 287-303 (RSNAQSDSPQGPLQLPS) shows a compositional bias: polar residues. Residues 319–333 (DAKSESFQLERLRSP) are compositionally biased toward basic and acidic residues.

Its subcellular location is the nucleus. Functionally, probable transcription factor involved in phosphate signaling in roots. The protein is Transcription factor HHO6 of Arabidopsis thaliana (Mouse-ear cress).